Consider the following 361-residue polypeptide: Histidinol-phosphate aminotransferase (361 aa).

An N6-(pyridoxal phosphate)lysine modification is found at K219.

It belongs to the class-II pyridoxal-phosphate-dependent aminotransferase family. Histidinol-phosphate aminotransferase subfamily. Homodimer. It depends on pyridoxal 5'-phosphate as a cofactor.

It catalyses the reaction L-histidinol phosphate + 2-oxoglutarate = 3-(imidazol-4-yl)-2-oxopropyl phosphate + L-glutamate. Its pathway is amino-acid biosynthesis; L-histidine biosynthesis; L-histidine from 5-phospho-alpha-D-ribose 1-diphosphate: step 7/9. This Acinetobacter baumannii (strain ATCC 17978 / DSM 105126 / CIP 53.77 / LMG 1025 / NCDC KC755 / 5377) protein is Histidinol-phosphate aminotransferase.